Here is a 261-residue protein sequence, read N- to C-terminus: Cytochrome c oxidase subunit 3 (261 aa).

Over 1–15 the chain is Mitochondrial matrix; that stretch reads MAHQAHAYHMVDPSP. A helical transmembrane segment spans residues 16-34; the sequence is WPLTGAVAALLLTSGLAVW. The Mitochondrial intermembrane portion of the chain corresponds to 35-40; that stretch reads FHFKSL. Residues 41 to 66 traverse the membrane as a helical segment; sequence TLLAMGLLLMILTMIQWWRDIIREGT. Topologically, residues 67 to 72 are mitochondrial matrix; sequence FQGHHT. Residues 73–105 traverse the membrane as a helical segment; the sequence is PPVQKGLRYGMILFITSEVFFFLGFFWAFYHSS. The Mitochondrial intermembrane portion of the chain corresponds to 106–128; that stretch reads LAPTPELGGIWPPTGITPLDPFE. A helical transmembrane segment spans residues 129-152; the sequence is VPLLNTAVLLASGVTVTWTHHSLM. The Mitochondrial matrix segment spans residues 153–155; the sequence is EGK. Residues 156–183 traverse the membrane as a helical segment; it reads RTEATQALTLTILLGLYFTALQAMEYYE. Residues 184–190 lie on the Mitochondrial intermembrane side of the membrane; that stretch reads APFTIAD. The chain crosses the membrane as a helical span at residues 191 to 223; it reads GVYGTTFFVATGFHGLHVIIGSTFLAGCLLRQI. The Mitochondrial matrix segment spans residues 224-232; sequence LYHFTSSHH. Residues 233–256 form a helical membrane-spanning segment; that stretch reads FGFEAAAWYWHFVDVVWLFLYVSI. Residues 257–261 lie on the Mitochondrial intermembrane side of the membrane; the sequence is YWWGS.

This sequence belongs to the cytochrome c oxidase subunit 3 family. In terms of assembly, component of the cytochrome c oxidase (complex IV, CIV), a multisubunit enzyme composed of 14 subunits. The complex is composed of a catalytic core of 3 subunits MT-CO1, MT-CO2 and MT-CO3, encoded in the mitochondrial DNA, and 11 supernumerary subunits COX4I, COX5A, COX5B, COX6A, COX6B, COX6C, COX7A, COX7B, COX7C, COX8 and NDUFA4, which are encoded in the nuclear genome. The complex exists as a monomer or a dimer and forms supercomplexes (SCs) in the inner mitochondrial membrane with NADH-ubiquinone oxidoreductase (complex I, CI) and ubiquinol-cytochrome c oxidoreductase (cytochrome b-c1 complex, complex III, CIII), resulting in different assemblies (supercomplex SCI(1)III(2)IV(1) and megacomplex MCI(2)III(2)IV(2)).

The protein localises to the mitochondrion inner membrane. The catalysed reaction is 4 Fe(II)-[cytochrome c] + O2 + 8 H(+)(in) = 4 Fe(III)-[cytochrome c] + 2 H2O + 4 H(+)(out). In terms of biological role, component of the cytochrome c oxidase, the last enzyme in the mitochondrial electron transport chain which drives oxidative phosphorylation. The respiratory chain contains 3 multisubunit complexes succinate dehydrogenase (complex II, CII), ubiquinol-cytochrome c oxidoreductase (cytochrome b-c1 complex, complex III, CIII) and cytochrome c oxidase (complex IV, CIV), that cooperate to transfer electrons derived from NADH and succinate to molecular oxygen, creating an electrochemical gradient over the inner membrane that drives transmembrane transport and the ATP synthase. Cytochrome c oxidase is the component of the respiratory chain that catalyzes the reduction of oxygen to water. Electrons originating from reduced cytochrome c in the intermembrane space (IMS) are transferred via the dinuclear copper A center (CU(A)) of subunit 2 and heme A of subunit 1 to the active site in subunit 1, a binuclear center (BNC) formed by heme A3 and copper B (CU(B)). The BNC reduces molecular oxygen to 2 water molecules using 4 electrons from cytochrome c in the IMS and 4 protons from the mitochondrial matrix. The sequence is that of Cytochrome c oxidase subunit 3 (mt-co3) from Polypterus ornatipinnis (Ornate bichir).